We begin with the raw amino-acid sequence, 316 residues long: Probable thioesterase lcsE (316 aa).

This sequence belongs to the AMT4 thioesterase family.

It participates in secondary metabolite biosynthesis. Probable thioesterase; part of the gene cluster that mediates the biosynthesis of the lipopeptide antibiotics leucinostatins that show extensive biological activities, including antimalarial, antiviral, antibacterial, antifungal, and antitumor activities, as well as phytotoxic. Leucinostatin A contains nine amino acid residues, including the unusual amino acid 4-methyl-L-proline (MePro), 2-amino-6-hydroxy-4-methyl-8-oxodecanoic acid (AHyMeOA), 3-hydroxyleucine (HyLeu), alpha-aminoisobutyric acid (AIB), beta-Ala, a 4-methylhex-2-enoic acid at the N-terminus as well as a N1,N1-dimethylpropane-1,2-diamine (DPD) at the C-terminus. The biosynthesis of leucinostatins is probably initiated with the assembly of 4-methylhex-2-enoic acid by a reducing PKS. Two reducing polyketide synthases, lcsB and lcsC, have been identified in the cluster and it is not clear which is the one that assembles 4-methylhex-2-enoic acid since both contain KS, AT, DH, cMT, ER, KR and ACP domains. The polyketide residue might be transferred to the NRPS lcsA, mediated by two additional enzymes, the acyl-CoA ligase lcsD and the thioesterase lcsE. The linear polyketide carboxylic acid, which is released from PKS, is converted to a CoA thioester by lcsD, and then lcsE hydrolyzes the thiol bond and shuttles the polyketide intermediate to lcsA. The C domain of the first module catalyzed the condensation of 4-methylhex-2-enoic acid and MePro carried by domain A1, followed by successive condensations of nine amino acids to trigger the elongation of the linear peptide. A5 and A6 domains of lcsA are proposed to incorporate leucine, A2 AHyMeOA, and A3 incorporates HyLeu. A4, A7 and A8 incorporate AIB. The AHyMeOA in leucinostatin A activated by the A2 might be produced by the second PKS (lcsB or lcsC) present within the cluster. The MePro is probably produced via leucine cyclization and may originate from a separate pathway, independent of the cluster. Another nonproteinogenic amino acid, beta-Ala, could be produced by an aspartic acid decarboxylase also localized outside of the cluster. Two candidates are VFPBJ_01400 and VFPBJ_10476. The final peptide scaffold may be released by the NAD(P)H-dependent thioester reductase (TE) at the C-terminal region of lcsA. Transamination of the lcsA product by the transaminase lcsP may produce DPD at the C-terminus. Further hydroxylation steps performed alternatively by the cytochrome P450 monooxygenases lcsI, lcsK and lcsN then yield the non-methylated leucinostatins precursor. It is also possible that leucines can be hydroxylated prior to their incorporation into the peptide. Varying extents of methylation then lead to the formation of leucinostatins A and B. The polypeptide is Probable thioesterase lcsE (Purpureocillium lilacinum (Paecilomyces lilacinus)).